A 189-amino-acid chain; its full sequence is Orotate phosphoribosyltransferase (189 aa).

Residues R94, K95, K98, and 120–128 (EDVTTTGGS) each bind 5-phospho-alpha-D-ribose 1-diphosphate. Orotate is bound by residues T124 and R152.

This sequence belongs to the purine/pyrimidine phosphoribosyltransferase family. PyrE subfamily. Homodimer. Requires Mg(2+) as cofactor.

It carries out the reaction orotidine 5'-phosphate + diphosphate = orotate + 5-phospho-alpha-D-ribose 1-diphosphate. It functions in the pathway pyrimidine metabolism; UMP biosynthesis via de novo pathway; UMP from orotate: step 1/2. Catalyzes the transfer of a ribosyl phosphate group from 5-phosphoribose 1-diphosphate to orotate, leading to the formation of orotidine monophosphate (OMP). The polypeptide is Orotate phosphoribosyltransferase (Thermococcus gammatolerans (strain DSM 15229 / JCM 11827 / EJ3)).